Reading from the N-terminus, the 511-residue chain is Probable dolichyl pyrophosphate Glc1Man9GlcNAc2 alpha-1,3-glucosyltransferase (511 aa).

11 helical membrane passes run 4-24 (LFWH…PAYH), 94-112 (VYFQ…VLGV), 124-144 (DTQQ…LIFV), 151-171 (YNGL…RQRF), 210-230 (VVSA…PFAV), 300-320 (PAIT…PILV), 332-352 (LVFL…GWHV), 356-370 (AILM…LTLV), 377-394 (YAYV…PLLF), 432-452 (WLYM…SFLL), and 469-491 (YSAL…ISWG).

Belongs to the ALG6/ALG8 glucosyltransferase family.

It is found in the endoplasmic reticulum membrane. The enzyme catalyses an alpha-D-Glc-(1-&gt;3)-alpha-D-Man-(1-&gt;2)-alpha-D-Man-(1-&gt;2)-alpha-D-Man-(1-&gt;3)-[alpha-D-Man-(1-&gt;2)-alpha-D-Man-(1-&gt;3)-[alpha-D-Man-(1-&gt;2)-alpha-D-Man-(1-&gt;6)]-alpha-D-Man-(1-&gt;6)]-beta-D-Man-(1-&gt;4)-beta-D-GlcNAc-(1-&gt;4)-alpha-D-GlcNAc-diphospho-di-trans,poly-cis-dolichol + a di-trans,poly-cis-dolichyl beta-D-glucosyl phosphate = an alpha-D-Glc-(1-&gt;3)-alpha-D-Glc-(1-&gt;3)-alpha-D-Man-(1-&gt;2)-alpha-D-Man-(1-&gt;2)-alpha-D-Man-(1-&gt;3)-[alpha-D-Man-(1-&gt;2)-alpha-D-Man-(1-&gt;3)-[alpha-D-Man-(1-&gt;2)-alpha-D-Man-(1-&gt;6)]-alpha-D-Man-(1-&gt;6)]-beta-D-Man-(1-&gt;4)-beta-D-GlcNAc-(1-&gt;4)-alpha-D-GlcNAc-diphospho-di-trans,poly-cis-dolichol + a di-trans,poly-cis-dolichyl phosphate + H(+). Its pathway is protein modification; protein glycosylation. Its function is as follows. Adds the second glucose residue to the lipid-linked oligosaccharide precursor for N-linked glycosylation. Transfers glucose from dolichyl phosphate glucose (Dol-P-Glc) onto the lipid-linked oligosaccharide Glc(1)Man(9)GlcNAc(2)-PP-Dol. Functions in developmental processes such as germband extension, the apical constriction of mesoderm precursor cells and ventral furrow formation in early embryogenesis prior to gastrulation. Involved in the glycosylation and intracellular distribution of shg (E-cadherin). Function in cell intercalation in the lateral epidermis during germband extension may be due to its effect on shg. The protein is Probable dolichyl pyrophosphate Glc1Man9GlcNAc2 alpha-1,3-glucosyltransferase of Drosophila melanogaster (Fruit fly).